A 396-amino-acid polypeptide reads, in one-letter code: Actin-related protein 6 (396 aa).

Belongs to the actin family. ARP6 subfamily. As to quaternary structure, interacts with CBX1 and CBX3.

It localises to the cytoplasm. It is found in the cytoskeleton. The protein resides in the nucleus. The protein localises to the nucleolus. In terms of biological role, required for formation and/or maintenance of the proper nucleolar structure and function. Plays a dual role in the regulation of ribosomal DNA (rDNA) transcription. In the presence of high glucose, it maintains active rDNA transcription through H2A.Z deposition and under glucose starvation, is required for the repression of rDNA transcription, and this function may be independent of H2A.Z. The protein is Actin-related protein 6 (ACTR6) of Gallus gallus (Chicken).